The following is a 367-amino-acid chain: Isocitrate dehydrogenase [NAD] regulatory subunit 2, mitochondrial (367 aa).

The N-terminal 25 residues, 1–25, are a transit peptide targeting the mitochondrion; it reads MSRQSFSLLKNLRSIASGSKIQTRS.

This sequence belongs to the isocitrate and isopropylmalate dehydrogenases family. In terms of assembly, heterooligomer of catalytic and regulatory subunits. As to expression, ubiquitous. Predominantly expressed in roots, stems and leaves.

Its subcellular location is the mitochondrion. In terms of biological role, performs an essential role in the oxidative function of the citric acid cycle. The chain is Isocitrate dehydrogenase [NAD] regulatory subunit 2, mitochondrial (IDH2) from Arabidopsis thaliana (Mouse-ear cress).